An 875-amino-acid chain; its full sequence is MEGEVATNGVILKHNGVKDISLETCWPEKKKPVEATSLSSGSSDIEEEISVECPKRVANQRRKRSKADEIKTKSSRKRKCDDENKCEENEKKQRSSVKKRATTWKEEEVVVDDEKKCEQQLQLVPSSKATSRSRSKKSVSVDTWLVNNEIDVSALSSRSESELSDSYLKTEYFNDCRSMTRSLKANLGELAICHQCSKGERRYLFICTFCEVRLYCFPCIKKWYPHLSTDDILEKCPFCRGTCNCCTCLHSSGLIETSKRKLDKYERFYHLRFLIVAMLPFLKKLCKAQDQEIETEAKVQDSMASQVDISESLCSNEERVFCNHCATSIVDLHRSCPKCSYELCLNCCQEIRGGWLSDRPECQLQFEYRGTRYIHGEAAEPSSSSVSEDETKTPSIKWNADENGSIRCAPKELGGCGDSVLELKRILPVTWMSDLEQKAETFLASYSIKPPMSYCRCSSDMSSMKRKAASRDGSSDNYLYSPDSLDVLKQEELLHFQEHWSKGEPVIVRNALNNTAGLSWEPMVMWRALCENVDSAISSNMSDVKAIDCLANCEVKINTLCFFEGYSKGRTYENFWPEMLKLKDWPPSDKFENLLPRHCDEFISALPFQEYSDPRSGILNIATKLPEGLLKPDLGPKTYVAYGTSDELGRGDSVTKLHCDMSDAVNILMHTAEVTLSEEQRSAIADLKQKHKQQNEKELQEQNGLEEEEVVSDEIVVYDETSGALWDIFKREDVPKLEEYLRKHCIEFRHTYCSRVTKVYHPIHDQSYFLTVEHKRKLKAEFGIEPWTFVQKLGEAVFIPAGCPHQVRNLKSCTKVAVDFVSPENIDECLRLTDEFRQLPKNHKAREDKLEIKKMVIYAVEQALKEVETLLLDRS.

The interval 31 to 103 is disordered; sequence KPVEATSLSS…RSSVKKRATT (73 aa). Positions 62–69 match the Nuclear localization signal motif; that stretch reads RKRSKADE. The span at 79–93 shows a compositional bias: basic and acidic residues; sequence KCDDENKCEENEKKQ. Residues Cys-193, Cys-196, Cys-207, Cys-210, Cys-216, Cys-219, Cys-236, Cys-239, Cys-322, Cys-325, Cys-339, and Cys-347 each contribute to the Zn(2+) site. The RING-type; degenerate zinc-finger motif lies at 193-240; it reads CHQCSKGERRYLFICTFCEVRLYCFPCIKKWYPHLSTDDILEKCPFCR. Residues 317 to 347 form a B box-type; degenerate zinc finger; it reads EERVFCNHCATSIVDLHRSCPKCSYELCLNC. The region spanning 614–837 is the JmjC domain; that stretch reads PRSGILNIAT…ECLRLTDEFR (224 aa). The Fe cation site is built by His-658, Asp-660, and His-805.

Belongs to the JARID1 histone demethylase family. Fe(2+) is required as a cofactor. As to expression, expressed in inflorescences, roots, siliques, leaves and stems.

Its subcellular location is the nucleus. May function as histone H3 lysine demethylase and be involved in regulation of gene expression. The chain is Lysine-specific demethylase JMJ26 from Arabidopsis thaliana (Mouse-ear cress).